Here is a 630-residue protein sequence, read N- to C-terminus: Zinc finger protein MSN4 (630 aa).

Methionine 1 carries the N-acetylmethionine modification. The segment covering 37–56 (TTNVSATSSNDNSANNSISS) has biased composition (low complexity). Disordered stretches follow at residues 37–77 (TTNV…ATNT) and 115–137 (FVND…DKIY). The residue at position 178 (serine 178) is a Phosphoserine. The short motif at 237-245 (SILEDFVSS) is the 9aaTAD element. Serine 263 carries the post-translational modification Phosphoserine. Positions 292–303 (KNSSNSKPTQQI) are enriched in polar residues. 2 disordered regions span residues 292-322 (KNSS…SPTT) and 360-379 (SISS…RQQR). Residues serine 316 and serine 319 each carry the phosphoserine modification. Over residues 360–373 (SISSSLNRISHSSS) the composition is skewed to low complexity. Position 479 is a phosphothreonine (threonine 479). The disordered stretch occupies residues 502–566 (TSQAHHAAQH…KSITTIDPNN (65 aa)). Residues 504 to 515 (QAHHAAQHHQQQ) show a composition bias toward low complexity. Composition is skewed to polar residues over residues 516 to 525 (PTKQATVSPN) and 532 to 547 (SSVT…NNNG). Serine 558 is subject to Phosphoserine. 2 consecutive C2H2-type zinc fingers follow at residues 573–596 (FKCK…RSVH) and 602–624 (FACM…LKTH).

Its subcellular location is the cytoplasm. It is found in the nucleus. Positive transcriptional factor that acts as a component of the stress responsive system. Recognizes and binds to the stress response element (STRE) which is involved in the response to various forms of stress (heat, oxidative, osmotic, etc.). Involved in the regulation of the CTT1, DDR2, HSP12 genes. In Saccharomyces cerevisiae (strain ATCC 204508 / S288c) (Baker's yeast), this protein is Zinc finger protein MSN4 (MSN4).